Here is a 116-residue protein sequence, read N- to C-terminus: Large ribosomal subunit protein bL17 (116 aa).

It belongs to the bacterial ribosomal protein bL17 family. Part of the 50S ribosomal subunit. Contacts protein L32.

The protein is Large ribosomal subunit protein bL17 of Prochlorococcus marinus subsp. pastoris (strain CCMP1986 / NIES-2087 / MED4).